A 111-amino-acid polypeptide reads, in one-letter code: BET1-like protein (111 aa).

At 1–86 the chain is on the cytoplasmic side; that stretch reads MADWTRAQSS…VARSGRDTRK (86 aa). 2 positions are modified to phosphoserine: Ser9 and Ser37. The t-SNARE coiled-coil homology domain occupies 15-77; that stretch reads EIVDRENKRM…TGSVKRFSTV (63 aa). The helical; Anchor for type IV membrane protein transmembrane segment at 87 to 107 threads the bilayer; the sequence is LLCGMAVVLIVAFFILSYLFS. The Vesicular portion of the chain corresponds to 108–111; sequence RTRT.

Component of a SNARE complex consisting of STX5, YKT6, GOSR1 and BET1L. Interacts with STX5. In terms of tissue distribution, widely expressed. Highest levels in heart, liver, skeletal muscle and kidney.

It is found in the golgi apparatus membrane. It localises to the golgi apparatus. The protein localises to the trans-Golgi network membrane. Functionally, vesicle SNARE required for targeting and fusion of retrograde transport vesicles with the Golgi complex. Required for the integrity of the Golgi complex. This chain is BET1-like protein, found in Rattus norvegicus (Rat).